A 760-amino-acid chain; its full sequence is MSWFVDLAGKAEDFLNKVDQGAATALTKPNQKSSLSYNSPDATDSTQYNAAAYSSTQQHRDSISASSLGTSTFISAAAGNIKKSKATVLAGTANVSSTTPLGSSSKASSNFVRPRKSEVNDDLLFDFLNSSDPPQSEKKEVRRETVSKAFSPTGVSAQSQMPTVSLASDLHTGPSVTPTPSSTQGLSRNSSLGSLSSSSHSVKTEDSSTRDQSQADVPESLTAGLDDLADPQPVLEIQSQDLQQQQQQQGQEHVISNLRLENQLLRNEVSSLNQEMASLIQRAKDMQEEVNLGRARADKWNSDQSRVDRTVRELSSQVDDLTEALSAKDGQLAVLKVRLDEADQLLKARSSALEEAQNERVRILQDHSEGSSLHSQAVQTLQDRLRDAEAAVKREQESYRQIQSEFAARLAKVEAERQTLAESLTNAERRLTEEKQRAEDLQQQAKSSRSAAEYTKQELQDYKNKASRILQSKEKLINSLKEGSGLEVLEGAGAGVELEELRHEKELQREEIQKLQAQIQSLRTEIQDLETQALTENESWREQLAEVQEQHAQQIRAKQEIEAELERSKQELQYIEEEHHRTKITLQGRVKDREDEIQKLRNQLTNKALSNSSQAELEGRLHQLTETLIQKQTMLEALGTEKNSLVFQLERLEQQLKSLQGGQNSASHINMAAMEGPGARQRNTPILFSDGDGPGTGVYGKVRKAASTIDRFSIRLGIFLRRYPMARVFVIIYMALLHLWVMIVLLTYTPEMHHSHPDGR.

Residues 1–727 (MSWFVDLAGK…IFLRRYPMAR (727 aa)) lie on the Cytoplasmic side of the membrane. A compositionally biased stretch (polar residues) spans 95–111 (VSSTTPLGSSSKASSNF). Disordered stretches follow at residues 95 to 114 (VSST…FVRP), 126 to 216 (DFLN…SQAD), and 432 to 456 (TEEK…EYTK). The segment covering 135–146 (QSEKKEVRRETV) has biased composition (basic and acidic residues). A compositionally biased stretch (polar residues) spans 148-166 (KAFSPTGVSAQSQMPTVSL). A compositionally biased stretch (low complexity) spans 174 to 201 (PSVTPTPSSTQGLSRNSSLGSLSSSSHS). Residues 249-668 (QGQEHVISNL…LQGGQNSASH (420 aa)) adopt a coiled-coil conformation. Polar residues predominate over residues 441-450 (LQQQAKSSRS). A helical; Anchor for type IV membrane protein transmembrane segment spans residues 728-748 (VFVIIYMALLHLWVMIVLLTY). The Extracellular portion of the chain corresponds to 749-760 (TPEMHHSHPDGR).

The protein localises to the golgi apparatus membrane. Functionally, involved in maintaining Golgi structure. Stimulates the formation of Golgi stacks and ribbons. Involved in intra-Golgi retrograde transport. The polypeptide is Golgin subfamily A member 5 (golga5) (Danio rerio (Zebrafish)).